We begin with the raw amino-acid sequence, 379 residues long: Queuine tRNA-ribosyltransferase (379 aa).

The Proton acceptor role is filled by Asp-94. Residues 94–98, Asp-148, Gln-191, and Gly-218 each bind substrate; that span reads DSGGF. The segment at 249–255 is RNA binding; the sequence is GVGSPDA. The Nucleophile role is filled by Asp-268. Positions 273–277 are RNA binding; important for wobble base 34 recognition; sequence TRIAR. Positions 306, 308, 311, and 337 each coordinate Zn(2+).

This sequence belongs to the queuine tRNA-ribosyltransferase family. Homodimer. Within each dimer, one monomer is responsible for RNA recognition and catalysis, while the other monomer binds to the replacement base PreQ1. Requires Zn(2+) as cofactor.

It carries out the reaction 7-aminomethyl-7-carbaguanine + guanosine(34) in tRNA = 7-aminomethyl-7-carbaguanosine(34) in tRNA + guanine. The protein operates within tRNA modification; tRNA-queuosine biosynthesis. Catalyzes the base-exchange of a guanine (G) residue with the queuine precursor 7-aminomethyl-7-deazaguanine (PreQ1) at position 34 (anticodon wobble position) in tRNAs with GU(N) anticodons (tRNA-Asp, -Asn, -His and -Tyr). Catalysis occurs through a double-displacement mechanism. The nucleophile active site attacks the C1' of nucleotide 34 to detach the guanine base from the RNA, forming a covalent enzyme-RNA intermediate. The proton acceptor active site deprotonates the incoming PreQ1, allowing a nucleophilic attack on the C1' of the ribose to form the product. After dissociation, two additional enzymatic reactions on the tRNA convert PreQ1 to queuine (Q), resulting in the hypermodified nucleoside queuosine (7-(((4,5-cis-dihydroxy-2-cyclopenten-1-yl)amino)methyl)-7-deazaguanosine). In Staphylococcus epidermidis (strain ATCC 35984 / DSM 28319 / BCRC 17069 / CCUG 31568 / BM 3577 / RP62A), this protein is Queuine tRNA-ribosyltransferase.